The primary structure comprises 412 residues: Gamma-glutamyl phosphate reductase (412 aa).

Belongs to the gamma-glutamyl phosphate reductase family.

The protein resides in the cytoplasm. It catalyses the reaction L-glutamate 5-semialdehyde + phosphate + NADP(+) = L-glutamyl 5-phosphate + NADPH + H(+). The protein operates within amino-acid biosynthesis; L-proline biosynthesis; L-glutamate 5-semialdehyde from L-glutamate: step 2/2. Catalyzes the NADPH-dependent reduction of L-glutamate 5-phosphate into L-glutamate 5-semialdehyde and phosphate. The product spontaneously undergoes cyclization to form 1-pyrroline-5-carboxylate. This chain is Gamma-glutamyl phosphate reductase, found in Lactiplantibacillus plantarum (strain ATCC BAA-793 / NCIMB 8826 / WCFS1) (Lactobacillus plantarum).